Reading from the N-terminus, the 209-residue chain is Ribosomal RNA large subunit methyltransferase E (209 aa).

Positions 63, 65, 83, 99, and 124 each coordinate S-adenosyl-L-methionine. The active-site Proton acceptor is Lys-164.

Belongs to the class I-like SAM-binding methyltransferase superfamily. RNA methyltransferase RlmE family.

It localises to the cytoplasm. It carries out the reaction uridine(2552) in 23S rRNA + S-adenosyl-L-methionine = 2'-O-methyluridine(2552) in 23S rRNA + S-adenosyl-L-homocysteine + H(+). Its function is as follows. Specifically methylates the uridine in position 2552 of 23S rRNA at the 2'-O position of the ribose in the fully assembled 50S ribosomal subunit. This chain is Ribosomal RNA large subunit methyltransferase E, found in Vibrio atlanticus (strain LGP32) (Vibrio splendidus (strain Mel32)).